The chain runs to 407 residues: Polygalacturonase (407 aa).

The first 26 residues, 1-26 (MAPHLNIVPSMFVLLLLFISASKVQS), serve as a signal peptide directing secretion. PbH1 repeat units lie at residues 180 to 206 (CKNITLERLKIEAPDESPNTDGIHMGK) and 207 to 228 (SEGVNIIASDIKTGDDCISIGD). Asn182 carries an N-linked (GlcNAc...) asparagine glycan. Catalysis depends on Asp221, which acts as the Proton donor. A disulfide bridge connects residues Cys223 and Cys240. His244 is an active-site residue. 2 PbH1 repeats span residues 260–281 (VEGIKISNCTITNTSNGARIKT) and 290–311 (VSEIHFEDITMNNVSSPILIDQ). Residues Asn267, Asn272, Asn302, and Asn331 are each glycosylated (N-linked (GlcNAc...) asparagine). Intrachain disulfides connect Cys351–Cys357 and Cys379–Cys395. The stretch at 357 to 384 (CQNVELADIDIKHNGAEPATSQCLNVKP) is one PbH1 5 repeat.

Belongs to the glycosyl hydrolase 28 family. As to expression, pollen.

It is found in the secreted. The protein resides in the cell wall. It carries out the reaction (1,4-alpha-D-galacturonosyl)n+m + H2O = (1,4-alpha-D-galacturonosyl)n + (1,4-alpha-D-galacturonosyl)m.. In terms of biological role, may function in the depolymerization of the pectin in its walls during pollen tube elongation, or in that of the pistil during pollination. This Gossypium hirsutum (Upland cotton) protein is Polygalacturonase (G9).